We begin with the raw amino-acid sequence, 150 residues long: MSDFIQSYNNDPFLGNLSTPVSTSTFTKGLLNNLPAYRRGLSPLLRGLEIGMAHGYFLVGPFDKLGPLRNTDVALLSGFLSAVGLIIILTVCLSMYGNVSFDKDDAKDLLQTTEGWGQFTAGFLVGAVGGSGFAYLLLANIPVLQNLGLS.

The Stromal segment spans residues 1–72 (MSDFIQSYNN…DKLGPLRNTD (72 aa)). A helical membrane pass occupies residues 73–93 (VALLSGFLSAVGLIIILTVCL). Residues 94-118 (SMYGNVSFDKDDAKDLLQTTEGWGQ) lie on the Lumenal side of the membrane. A helical transmembrane segment spans residues 119-139 (FTAGFLVGAVGGSGFAYLLLA). At 140 to 150 (NIPVLQNLGLS) the chain is on the stromal side.

It belongs to the PsaL family.

The protein localises to the plastid. Its subcellular location is the chloroplast thylakoid membrane. The sequence is that of Photosystem I reaction center subunit XI from Gracilaria tenuistipitata var. liui (Red alga).